Here is a 396-residue protein sequence, read N- to C-terminus: Cysteine protease ATG4A (396 aa).

Cysteine 77 acts as the Nucleophile in catalysis. Active-site residues include aspartate 276 and histidine 278. Positions 390–393 match the LIR motif; sequence FEIL.

The protein belongs to the peptidase C54 family. As to quaternary structure, interacts with ATG9A; the interaction is direct.

It is found in the cytoplasm. It carries out the reaction [protein]-C-terminal L-amino acid-glycyl-phosphatidylethanolamide + H2O = [protein]-C-terminal L-amino acid-glycine + a 1,2-diacyl-sn-glycero-3-phosphoethanolamine. Inhibited by N-ethylmaleimide. Redox-regulated during autophagy since reducing conditions activate ATG4A whereas an oxidizing environment such as the presence of H(2)O(2) inhibits its activity. Cysteine protease that plays a key role in autophagy by mediating both proteolytic activation and delipidation of ATG8 family proteins. The protease activity is required for proteolytic activation of ATG8 family proteins: cleaves the C-terminal amino acid of ATG8 proteins to reveal a C-terminal glycine. Exposure of the glycine at the C-terminus is essential for ATG8 proteins conjugation to phosphatidylethanolamine (PE) and insertion to membranes, which is necessary for autophagy. Preferred substrate is GABARAPL2 followed by MAP1LC3A and GABARAP. Protease activity is also required to counteract formation of high-molecular weight conjugates of ATG8 proteins (ATG8ylation): acts as a deubiquitinating-like enzyme that removes ATG8 conjugated to other proteins, such as ATG3. In addition to the protease activity, also mediates delipidation of ATG8 family proteins. Catalyzes delipidation of PE-conjugated forms of ATG8 proteins during macroautophagy. Compared to ATG4B, the major protein for proteolytic activation of ATG8 proteins, shows weaker ability to cleave the C-terminal amino acid of ATG8 proteins, while it displays stronger delipidation activity. Involved in phagophore growth during mitophagy independently of its protease activity and of ATG8 proteins: acts by regulating ATG9A trafficking to mitochondria and promoting phagophore-endoplasmic reticulum contacts during the lipid transfer phase of mitophagy. This Mus musculus (Mouse) protein is Cysteine protease ATG4A.